A 414-amino-acid chain; its full sequence is Phospholipid-transporting ATPase accessory subunit LEM3 (414 aa).

Residues Met1–Asn50 form a required for localization to the plasma membrane region. Topologically, residues Met1–Thr74 are cytoplasmic. Residues Ala20–Arg52 form a disordered region. Over residues Asn26–Glu42 the composition is skewed to acidic residues. The residue at position 36 (Ser36) is a Phosphoserine. The helical transmembrane segment at Val75–Ala95 threads the bilayer. Over Gln96–Pro372 the chain is Extracellular. 2 cysteine pairs are disulfide-bonded: Cys110–Cys159 and Cys216–Cys231. Residue Asn113 is glycosylated (N-linked (GlcNAc...) asparagine). N-linked (GlcNAc...) asparagine glycosylation is found at Asn240, Asn256, Asn279, Asn298, and Asn332. The helical transmembrane segment at Phe373–Leu393 threads the bilayer. The Cytoplasmic portion of the chain corresponds to Thr394–Lys414. Residues Gly400–Lys414 are required for localization to the plasma membrane.

This sequence belongs to the CDC50/LEM3 family. As to quaternary structure, component of a flippase complex consisting of DNF1 or DNF2 and LEM3. Interacts with DNF1; the interaction is direct and required for their mutual export from the endoplasmic reticulum. Interacts with DNF2; the interaction is direct and required for their mutual export from the endoplasmic reticulum.

It is found in the cell membrane. Its function is as follows. Accessory component of a P4-ATPase flippase complex which catalyzes the hydrolysis of ATP coupled to the transport of glucosylceramide, phosphatidylcholine, phosphatidylethanolamine, and small amounts of phosphatidylserine from the lumenal to the cytosolic leaflet of the cell membrane and ensures the maintenance of asymmetric distribution of phospholipids. Contributes to substrate binding and specificity of the P4-ATPase catalytic subunit. This Saccharomyces cerevisiae (strain ATCC 204508 / S288c) (Baker's yeast) protein is Phospholipid-transporting ATPase accessory subunit LEM3.